The following is a 140-amino-acid chain: LNSPNAVLQHMSIPQFLGKGTPVVFVRKSESDYGDVVRVMTGVYIKFFFKTSKLCVDETVWKVNDEELVVTGGNVGNENDIFKIKKTDLVIRGMKNVYKLLHCRSHLGCKNIGGNFKNGYPRLAAVDDDKDFIPFVFIKA.

Cysteine 103 and cysteine 109 are joined by a disulfide.

It belongs to the protease inhibitor I3 (leguminous Kunitz-type inhibitor) family.

Its subcellular location is the vacuole. In terms of biological role, inhibitor of cysteine proteases. May protect the plant by inhibiting proteases of invading organisms. The protein is Cysteine protease inhibitor 6 of Solanum tuberosum (Potato).